The sequence spans 55 residues: Large ribosomal subunit protein bL33 (55 aa).

Belongs to the bacterial ribosomal protein bL33 family.

In Azoarcus sp. (strain BH72), this protein is Large ribosomal subunit protein bL33.